The chain runs to 354 residues: Multiple sugar-binding periplasmic receptor ChvE (354 aa).

The N-terminal stretch at 1–25 (MKSIISLTAAAAIGVAMFVAPAFAA) is a signal peptide.

This sequence belongs to the bacterial solute-binding protein 2 family.

It is found in the periplasm. Required for effective transcriptional induction of the vir genes by monosaccharides in response to plant signals and for normal growth and chemotaxis towards certain sugars. Functions as a periplasmic multiple sugar-binding receptor protein. It does not interact with a transport system. The sequence is that of Multiple sugar-binding periplasmic receptor ChvE (chvE) from Rhizobium radiobacter (Agrobacterium tumefaciens).